Consider the following 377-residue polypeptide: MDSALSDPHNGSAEAGGPTNSTTRPPSTPEGIALAYGSLLLMALLPIFFGALRSVRCARGKNASDMPETITSRDAARFPIIASCTLLGLYLFFKIFSQEYINLLLSMYFFVLGILALSHTISPFMNKFFPASFPNRQYQLLFTQGSGENKEEIINYEFDTKDLVCLGLSSIVGVWYLLRKHWIANNLFGLAFSLNGVELLHLNNVSTGCILLGGLFIYDVFWVFGTNVMVTVAKSFEAPIKLVFPQDLLEKGLEANNFAMLGLGDVVIPGIFIALLLRFDISLKKNTHTYFYTSFAAYIFGLGLTIFIMHIFKHAQPALLYLVPACIGFPVLVALAKGEVTEMFSYEESNPKDPAAVTESKEGTEASASKGLEKKEK.

The segment at 1 to 27 (MDSALSDPHNGSAEAGGPTNSTTRPPS) is disordered. Topologically, residues 1–31 (MDSALSDPHNGSAEAGGPTNSTTRPPSTPEG) are lumenal. Residues N10 and N20 are each glycosylated (N-linked (GlcNAc...) asparagine). The chain crosses the membrane as a helical span at residues 32–52 (IALAYGSLLLMALLPIFFGAL). The Cytoplasmic segment spans residues 53-77 (RSVRCARGKNASDMPETITSRDAAR). A helical membrane pass occupies residues 78–98 (FPIIASCTLLGLYLFFKIFSQ). The Lumenal portion of the chain corresponds to 99 to 100 (EY). A helical transmembrane segment spans residues 101–121 (INLLLSMYFFVLGILALSHTI). The Cytoplasmic portion of the chain corresponds to 122–157 (SPFMNKFFPASFPNRQYQLLFTQGSGENKEEIINYE). The helical transmembrane segment at 158-178 (FDTKDLVCLGLSSIVGVWYLL) threads the bilayer. Residues 179–181 (RKH) lie on the Lumenal side of the membrane. A helical membrane pass occupies residues 182–202 (WIANNLFGLAFSLNGVELLHL). At 203 to 209 (NNVSTGC) the chain is on the cytoplasmic side. Residues 210 to 230 (ILLGGLFIYDVFWVFGTNVMV) form a helical membrane-spanning segment. Residue D219 is part of the active site. The Lumenal segment spans residues 231–256 (TVAKSFEAPIKLVFPQDLLEKGLEAN). A helical membrane pass occupies residues 257–277 (NFAMLGLGDVVIPGIFIALLL). D265 is a catalytic residue. The Cytoplasmic segment spans residues 278–290 (RFDISLKKNTHTY). The chain crosses the membrane as a helical span at residues 291–311 (FYTSFAAYIFGLGLTIFIMHI). Over 312-314 (FKH) the chain is Lumenal. Residues 315–335 (AQPALLYLVPACIGFPVLVAL) traverse the membrane as a helical segment. A PAL motif is present at residues 317–319 (PAL). Topologically, residues 336–377 (AKGEVTEMFSYEESNPKDPAAVTESKEGTEASASKGLEKKEK) are cytoplasmic. The interval 345-377 (SYEESNPKDPAAVTESKEGTEASASKGLEKKEK) is disordered. Position 367 is a phosphoserine (S367).

It belongs to the peptidase A22B family. As to quaternary structure, monomer. Homodimer. Interacts with RNF139. Interacts with DERL1 and XBP1 isoform 1. N-glycosylated. In terms of tissue distribution, widely expressed with highest levels in kidney, liver, placenta, lung, leukocytes and small intestine and reduced expression in heart and skeletal muscle. Expressed abundantly in the CNS with highest levels in thalamus and medulla.

The protein resides in the endoplasmic reticulum membrane. Its subcellular location is the membrane. It is found in the cell membrane. In terms of biological role, catalyzes intramembrane proteolysis of signal peptides that have been removed from precursors of secretory and membrane proteins, resulting in the release of the fragment from the ER membrane into the cytoplasm. Required to generate lymphocyte cell surface (HLA-E) epitopes derived from MHC class I signal peptides. May be necessary for the removal of the signal peptide that remains attached to the hepatitis C virus core protein after the initial proteolytic processing of the polyprotein. Involved in the intramembrane cleavage of the integral membrane protein PSEN1. Cleaves the integral membrane protein XBP1 isoform 1 in a DERL1/RNF139-dependent manner. May play a role in graft rejection. In Homo sapiens (Human), this protein is Signal peptide peptidase.